Here is a 342-residue protein sequence, read N- to C-terminus: WW domain binding protein 1-like (342 aa).

A helical membrane pass occupies residues 42-62 (LWWFWLVWTIIIILSCCCVCH). Disordered stretches follow at residues 133–247 (LPPQ…RRFT) and 292–320 (PGDE…RPPA). Over residues 158-173 (SSPLSEPSRSSTRPPS) the composition is skewed to low complexity. A Phosphoserine modification is found at Ser173. Residues 212 to 240 (LDKDAECREELLKDDSSEHGAPDSKEKTP) show a composition bias toward basic and acidic residues.

It localises to the membrane. This is WW domain binding protein 1-like (WBP1L) from Homo sapiens (Human).